The chain runs to 285 residues: Dermonecrotic toxin LiSicTox-alphaIA2aii (285 aa).

A propeptide spanning residues 1–5 is cleaved from the precursor; sequence DVEER. The active site involves H17. Positions 37 and 39 each coordinate Mg(2+). The active-site Nucleophile is the H53. 2 disulfides stabilise this stretch: C57–C63 and C59–C202. D97 provides a ligand contact to Mg(2+). An N-linked (GlcNAc...) asparagine glycan is attached at N262.

The protein belongs to the arthropod phospholipase D family. Class II subfamily. Class IIa sub-subfamily. Mg(2+) is required as a cofactor. As to expression, expressed by the venom gland.

It localises to the secreted. The catalysed reaction is an N-(acyl)-sphingosylphosphocholine = an N-(acyl)-sphingosyl-1,3-cyclic phosphate + choline. The enzyme catalyses an N-(acyl)-sphingosylphosphoethanolamine = an N-(acyl)-sphingosyl-1,3-cyclic phosphate + ethanolamine. It carries out the reaction a 1-acyl-sn-glycero-3-phosphocholine = a 1-acyl-sn-glycero-2,3-cyclic phosphate + choline. It catalyses the reaction a 1-acyl-sn-glycero-3-phosphoethanolamine = a 1-acyl-sn-glycero-2,3-cyclic phosphate + ethanolamine. In terms of biological role, dermonecrotic toxins cleave the phosphodiester linkage between the phosphate and headgroup of certain phospholipids (sphingolipid and lysolipid substrates), forming an alcohol (often choline) and a cyclic phosphate. This toxin acts on sphingomyelin (SM) with high activity. It may also act on ceramide phosphoethanolamine (CPE), lysophosphatidylcholine (LPC) and lysophosphatidylethanolamine (LPE), but not on lysophosphatidylserine (LPS), and lysophosphatidylglycerol (LPG). It acts by transphosphatidylation, releasing exclusively cyclic phosphate products as second products. Shows high hemolytic activity. Induces dermonecrosis, vascular permeability, edema, inflammatory response, and platelet aggregation. Also shows cytotoxicity against renal epithelial cells. In addition, also induces hemolysis in a complement-dependent manner and probably also in a complement-independent manner. The hemolysis provoked in a complement-independent manner may be composed of several steps. The toxin may bind to erythrocyte membranes, may hydrolyze membrane phospholipids (SM and LPC) thus generating metabolism products that may cause hemolysis, probably by provoking an increase of calcium inside cells. The calcium influx may be due to the opening of L-type calcium channels, since L-type calcium channel blockers inhibit calcium influx. In vivo, is lethal to mice when intraperitoneally injected. In Loxosceles intermedia (Brown spider), this protein is Dermonecrotic toxin LiSicTox-alphaIA2aii.